The primary structure comprises 396 residues: Tyrosine--tRNA ligase (396 aa).

The 'HIGH' region motif lies at 42 to 51 (PTAPDIHLGH). The 'KMSKS' region signature appears at 226–230 (KMSKS). Position 229 (Lys-229) interacts with ATP. Residues 334 to 395 (LPIANLLKEA…GKRKFAKIII (62 aa)) enclose the S4 RNA-binding domain.

It belongs to the class-I aminoacyl-tRNA synthetase family. TyrS type 2 subfamily. In terms of assembly, homodimer.

Its subcellular location is the cytoplasm. The enzyme catalyses tRNA(Tyr) + L-tyrosine + ATP = L-tyrosyl-tRNA(Tyr) + AMP + diphosphate + H(+). In terms of biological role, catalyzes the attachment of tyrosine to tRNA(Tyr) in a two-step reaction: tyrosine is first activated by ATP to form Tyr-AMP and then transferred to the acceptor end of tRNA(Tyr). The sequence is that of Tyrosine--tRNA ligase from Francisella tularensis subsp. tularensis (strain SCHU S4 / Schu 4).